The following is a 273-amino-acid chain: Nitrogenase iron protein (273 aa).

8–15 (GKGGIGKS) provides a ligand contact to ATP. Cys-95 contributes to the [4Fe-4S] cluster binding site. The residue at position 98 (Arg-98) is an ADP-ribosylarginine; by dinitrogenase reductase ADP-ribosyltransferase. Residue Cys-130 coordinates [4Fe-4S] cluster.

Belongs to the NifH/BchL/ChlL family. In terms of assembly, homodimer. [4Fe-4S] cluster is required as a cofactor. Post-translationally, the reversible ADP-ribosylation of Arg-98 inactivates the nitrogenase reductase and regulates nitrogenase activity.

The catalysed reaction is N2 + 8 reduced [2Fe-2S]-[ferredoxin] + 16 ATP + 16 H2O = H2 + 8 oxidized [2Fe-2S]-[ferredoxin] + 2 NH4(+) + 16 ADP + 16 phosphate + 6 H(+). Functionally, the key enzymatic reactions in nitrogen fixation are catalyzed by the nitrogenase complex, which has 2 components: the iron protein and the molybdenum-iron protein. The polypeptide is Nitrogenase iron protein (Roseiflexus castenholzii (strain DSM 13941 / HLO8)).